The sequence spans 178 residues: 2-C-methyl-D-erythritol 2,4-cyclodiphosphate synthase (178 aa).

A divalent metal cation contacts are provided by Asp-24, His-26, and His-61. 4-CDP-2-C-methyl-D-erythritol 2-phosphate is bound at residue 24–26; that stretch reads DSH. Residue 150–153 coordinates 4-CDP-2-C-methyl-D-erythritol 2-phosphate; the sequence is TSGE.

This sequence belongs to the IspF family. Homotrimer. The cofactor is a divalent metal cation.

The enzyme catalyses 4-CDP-2-C-methyl-D-erythritol 2-phosphate = 2-C-methyl-D-erythritol 2,4-cyclic diphosphate + CMP. It participates in isoprenoid biosynthesis; isopentenyl diphosphate biosynthesis via DXP pathway; isopentenyl diphosphate from 1-deoxy-D-xylulose 5-phosphate: step 4/6. Its function is as follows. Involved in the biosynthesis of isopentenyl diphosphate (IPP) and dimethylallyl diphosphate (DMAPP), two major building blocks of isoprenoid compounds. Catalyzes the conversion of 4-diphosphocytidyl-2-C-methyl-D-erythritol 2-phosphate (CDP-ME2P) to 2-C-methyl-D-erythritol 2,4-cyclodiphosphate (ME-CPP) with a corresponding release of cytidine 5-monophosphate (CMP). In Chlamydia trachomatis serovar L2 (strain ATCC VR-902B / DSM 19102 / 434/Bu), this protein is 2-C-methyl-D-erythritol 2,4-cyclodiphosphate synthase.